Reading from the N-terminus, the 198-residue chain is ATP-dependent Clp protease proteolytic subunit 1 (198 aa).

Serine 98 functions as the Nucleophile in the catalytic mechanism. Residue histidine 123 is part of the active site.

This sequence belongs to the peptidase S14 family. In terms of assembly, fourteen ClpP subunits assemble into 2 heptameric rings which stack back to back to give a disk-like structure with a central cavity, resembling the structure of eukaryotic proteasomes.

It is found in the cytoplasm. The enzyme catalyses Hydrolysis of proteins to small peptides in the presence of ATP and magnesium. alpha-casein is the usual test substrate. In the absence of ATP, only oligopeptides shorter than five residues are hydrolyzed (such as succinyl-Leu-Tyr-|-NHMec, and Leu-Tyr-Leu-|-Tyr-Trp, in which cleavage of the -Tyr-|-Leu- and -Tyr-|-Trp bonds also occurs).. Functionally, cleaves peptides in various proteins in a process that requires ATP hydrolysis. Has a chymotrypsin-like activity. Plays a major role in the degradation of misfolded proteins. ClpXP1 is involved in the complete degradation of the Site-2 clipped anti-sigma-W factor RsiW. This results in the release of SigW and the transcription activation of the genes under the control of the sigma-W factor. This chain is ATP-dependent Clp protease proteolytic subunit 1, found in Bacillus licheniformis (strain ATCC 14580 / DSM 13 / JCM 2505 / CCUG 7422 / NBRC 12200 / NCIMB 9375 / NCTC 10341 / NRRL NRS-1264 / Gibson 46).